A 184-amino-acid chain; its full sequence is MKESGEHGETSKAPLNRGVSKGLSVLDLILRFIAIIGTLASAIAMGTTNETLPFFTQFIRFKAQYSDLPTLTFFVVANSIVCAYLILSLPLSIVHIIRSRAKFSRLLLIFLDAVMLALVTAGASAAAAIVYLAHKGNVRANWLAICQQFDSFCERISGSLIGSFGAMVVLILLILLSAIALARR.

The Cytoplasmic segment spans residues 1 to 24; it reads MKESGEHGETSKAPLNRGVSKGLS. The chain crosses the membrane as a helical span at residues 25–45; the sequence is VLDLILRFIAIIGTLASAIAM. Residues 46–72 are Extracellular-facing; that stretch reads GTTNETLPFFTQFIRFKAQYSDLPTLT. Residue Asn-49 is glycosylated (N-linked (GlcNAc...) asparagine). Residues 73–93 form a helical membrane-spanning segment; sequence FFVVANSIVCAYLILSLPLSI. Residues 94–105 are Cytoplasmic-facing; that stretch reads VHIIRSRAKFSR. Residues 106–126 form a helical membrane-spanning segment; the sequence is LLLIFLDAVMLALVTAGASAA. The Extracellular portion of the chain corresponds to 127–159; the sequence is AAIVYLAHKGNVRANWLAICQQFDSFCERISGS. The chain crosses the membrane as a helical span at residues 160–180; that stretch reads LIGSFGAMVVLILLILLSAIA. Over 181-184 the chain is Cytoplasmic; the sequence is LARR.

It belongs to the Casparian strip membrane proteins (CASP) family. In terms of assembly, homodimer and heterodimers.

It is found in the cell membrane. In terms of biological role, regulates membrane-cell wall junctions and localized cell wall deposition. Required for establishment of the Casparian strip membrane domain (CSD) and the subsequent formation of Casparian strips, a cell wall modification of the root endodermis that determines an apoplastic barrier between the intraorganismal apoplasm and the extraorganismal apoplasm and prevents lateral diffusion. In Panicum virgatum (Blackwell switchgrass), this protein is Casparian strip membrane protein 1.